We begin with the raw amino-acid sequence, 247 residues long: ATP synthase subunit a, chloroplastic (247 aa).

The next 5 membrane-spanning stretches (helical) occupy residues 38–58, 95–115, 134–154, 199–219, and 220–240; these read QVLITSWVVIVILLGSAIVTV, VPFIGTLFLFIFVSNWSGALL, INTTVALALLTSIAYFYAGLS, LVVVVLVSLVPSVVPIPVMFL, and GLFTSGIQALIFATLAAAYIG.

The protein belongs to the ATPase A chain family. As to quaternary structure, F-type ATPases have 2 components, CF(1) - the catalytic core - and CF(0) - the membrane proton channel. CF(1) has five subunits: alpha(3), beta(3), gamma(1), delta(1), epsilon(1). CF(0) has four main subunits: a, b, b' and c.

It localises to the plastid. The protein localises to the chloroplast thylakoid membrane. Functionally, key component of the proton channel; it plays a direct role in the translocation of protons across the membrane. The sequence is that of ATP synthase subunit a, chloroplastic from Populus trichocarpa (Western balsam poplar).